The primary structure comprises 1049 residues: Solvent-resistant pump membrane transporter SrpB (1049 aa).

12 helical membrane passes run 10–30 (IFAW…LAKM), 339–359 (SVVH…YLFL), 366–386 (LIPT…LPYF), 392–412 (VLTM…AIVV), 440–460 (GALV…AFFG), 470–490 (FAIT…VFTP), 542–562 (LAFL…PKAF), 871–891 (APLL…ALYE), 895–915 (VPVS…LATL), 927–947 (VGLM…VEFA), 973–993 (ILMT…ASGA), and 1008–1028 (GMIT…VVVV).

This sequence belongs to the resistance-nodulation-cell division (RND) (TC 2.A.6) family.

The protein resides in the cell inner membrane. Functionally, the inner membrane transporter component of an organic solvent efflux pump. Involved in export of a number of low log POW compounds including hexane (log POW 3.5), toluene (log POW 2.5) and dimethylphthalate (log POW 2.3). The solvent resistance phenotype has been postulated to depend on the operon expression level. The sequence is that of Solvent-resistant pump membrane transporter SrpB (srpB) from Pseudomonas putida (Arthrobacter siderocapsulatus).